We begin with the raw amino-acid sequence, 718 residues long: Acetolactate synthase, mitochondrial (718 aa).

Disordered regions lie at residues 1–53 and 75–99; these read MLTR…YDTP and QSSASTAAASPAVRPQPAQHFQAAP. The segment covering 32–45 has biased composition (polar residues); sequence RYSNNIHTSSTQNA. Residues 76–99 are compositionally biased toward low complexity; the sequence is SSASTAAASPAVRPQPAQHFQAAP. Residue E173 coordinates thiamine diphosphate. R275 provides a ligand contact to FAD. Positions 301-326 are disordered; sequence VQPGHSPYLPSNPLNPSSQPSDPLPG. Residues 306-325 show a composition bias toward low complexity; sequence SPYLPSNPLNPSSQPSDPLP. FAD is bound by residues 397–418 and 449–468; these read HGSAYANFAMQEADVLIALGVR and EIQPKNINKIVEAQIPVLGD. A thiamine pyrophosphate binding region spans residues 541 to 621; sequence QHQMWACQYY…VKVLLFNNEF (81 aa). Residues D592 and N619 each contribute to the Mg(2+) site.

The protein belongs to the TPP enzyme family. Mg(2+) is required as a cofactor. The cofactor is thiamine diphosphate.

It localises to the mitochondrion. It catalyses the reaction 2 pyruvate + H(+) = (2S)-2-acetolactate + CO2. The protein operates within amino-acid biosynthesis; L-isoleucine biosynthesis; L-isoleucine from 2-oxobutanoate: step 1/4. Its pathway is amino-acid biosynthesis; L-valine biosynthesis; L-valine from pyruvate: step 1/4. The sequence is that of Acetolactate synthase, mitochondrial (ILV2) from Cryptococcus neoformans var. grubii serotype A (strain H99 / ATCC 208821 / CBS 10515 / FGSC 9487) (Filobasidiella neoformans var. grubii).